The primary structure comprises 225 residues: Two-component response regulator PhoP (225 aa).

Positions 2-116 constitute a Response regulatory domain; it reads KLLVVEDEAL…ELEARLNALL (115 aa). Asp51 is modified (4-aspartylphosphate). Positions 124–222 form a DNA-binding region, ompR/PhoB-type; it reads QSTIEAGPLV…VRGQGYLFTE (99 aa).

Its function is as follows. Member of the two-component regulatory system PhoP/PhoQ that plays a role in the regulation of resistance towards polymyxin B and cationic antimicrobial peptides in response to limiting concentrations of Mg(2+). Functions as a transcriptional activator by direct binding to a cis-acting sequence upstream of the target gene promoters including oprH and pmrH promoters. The sequence is that of Two-component response regulator PhoP (phoP) from Pseudomonas aeruginosa (strain ATCC 15692 / DSM 22644 / CIP 104116 / JCM 14847 / LMG 12228 / 1C / PRS 101 / PAO1).